Reading from the N-terminus, the 134-residue chain is Large ribosomal subunit protein uL22 (134 aa).

This sequence belongs to the universal ribosomal protein uL22 family. As to quaternary structure, part of the 50S ribosomal subunit.

This protein binds specifically to 23S rRNA; its binding is stimulated by other ribosomal proteins, e.g. L4, L17, and L20. It is important during the early stages of 50S assembly. It makes multiple contacts with different domains of the 23S rRNA in the assembled 50S subunit and ribosome. In terms of biological role, the globular domain of the protein is located near the polypeptide exit tunnel on the outside of the subunit, while an extended beta-hairpin is found that lines the wall of the exit tunnel in the center of the 70S ribosome. This is Large ribosomal subunit protein uL22 from Rhodococcus jostii (strain RHA1).